We begin with the raw amino-acid sequence, 323 residues long: Elongation factor P--(R)-beta-lysine ligase (323 aa).

Residue 74-76 (SPE) participates in substrate binding. ATP contacts are provided by residues 98-100 (RNE) and Asn-107. Tyr-116 serves as a coordination point for substrate. 242-243 (EL) provides a ligand contact to ATP. Residue Glu-249 coordinates substrate. Gly-298 lines the ATP pocket.

Belongs to the class-II aminoacyl-tRNA synthetase family. EpmA subfamily. Homodimer.

The catalysed reaction is D-beta-lysine + L-lysyl-[protein] + ATP = N(6)-((3R)-3,6-diaminohexanoyl)-L-lysyl-[protein] + AMP + diphosphate + H(+). Functionally, with EpmB is involved in the beta-lysylation step of the post-translational modification of translation elongation factor P (EF-P). Catalyzes the ATP-dependent activation of (R)-beta-lysine produced by EpmB, forming a lysyl-adenylate, from which the beta-lysyl moiety is then transferred to the epsilon-amino group of a conserved specific lysine residue in EF-P. This chain is Elongation factor P--(R)-beta-lysine ligase, found in Vibrio parahaemolyticus serotype O3:K6 (strain RIMD 2210633).